Consider the following 706-residue polypeptide: Melanopsin (706 aa).

Over 1 to 86 (MTEIPSFQPP…VWDIPPLAHY (86 aa)) the chain is Extracellular. N-linked (GlcNAc...) asparagine glycosylation is found at Asn12, Asn64, and Asn69. A helical transmembrane segment spans residues 87–107 (IVGTAVFCIGCCGMFGNAVVV). At 108–121 (YSFIKSKGLRTPAN) the chain is on the cytoplasmic side. Residues 122 to 142 (FFIINLALSDFLMNLTNMPIF) traverse the membrane as a helical segment. Residues 143 to 159 (AVNSAFQRWLLSDFACE) lie on the Extracellular side of the membrane. The cysteines at positions 158 and 236 are disulfide-linked. The chain crosses the membrane as a helical span at residues 160–180 (LYGFAGGLFGCLSINTLMAIS). The Cytoplasmic segment spans residues 181–201 (MDRYLVITKPFLVMRIVTKQR). Residues 202 to 222 (VMFAILLLWIWSLVWALPPLF) form a helical membrane-spanning segment. Residues 223 to 248 (GWSAYVSEGFGTSCTFDYMTPKLSYH) lie on the Extracellular side of the membrane. Residues 249 to 269 (IFTYIIFFTMYFIPGGVMIYC) traverse the membrane as a helical segment. The Cytoplasmic segment spans residues 270-314 (YYNIFATVKSGDKQFGKAVKEMAHEDVKNKAQQERQRKNEIKTAK). A helical transmembrane segment spans residues 315–335 (IAFIVISLFMSAWTPYAVVSA). The Extracellular segment spans residues 336–351 (LGTLGYQDLVTPYLQS). The chain crosses the membrane as a helical span at residues 352–372 (IPAMFAKSSAVYSPIVYAITY). Lys358 is subject to N6-(retinylidene)lysine. Residues 373–706 (PKFREAVKKH…LSEAHDETVL (334 aa)) are Cytoplasmic-facing. 3 disordered regions span residues 393–446 (SEEE…RQDT), 571–599 (RTESGYDRSQDSQRKKVVGDTHRSRSFNT), and 630–658 (QSSEKHEYDNPAFDEGITEVDTDSENETE). Low complexity-rich tracts occupy residues 404–418 (QSSASASMSMTQTTA) and 426–442 (SVDSGSSVSVDDSSGVS). Over residues 571 to 593 (RTESGYDRSQDSQRKKVVGDTHR) the composition is skewed to basic and acidic residues. Positions 645 to 658 (GITEVDTDSENETE) are enriched in acidic residues.

Belongs to the G-protein coupled receptor 1 family. Opsin subfamily. As to expression, expressed in Joseph cells and photoreceptor cells of the dorsal ocelli.

The protein resides in the cell membrane. In terms of biological role, photoreceptor implicated in non-image-forming responses to light. Photoisomerizes covalently bound all-trans retinal back to 11-cis retinal. Most likely coupled to the G(q) signaling cascade. This Branchiostoma belcheri (Amphioxus) protein is Melanopsin.